A 361-amino-acid chain; its full sequence is tRNA-specific 2-thiouridylase MnmA (361 aa).

Residues 9-16 (GMSGGVDS) and Met35 contribute to the ATP site. The interval 95–97 (NPD) is interaction with target base in tRNA. The active-site Nucleophile is the Cys100. A disulfide bridge connects residues Cys100 and Cys196. Gly124 provides a ligand contact to ATP. The interval 146–148 (KDQ) is interaction with tRNA. Cys196 functions as the Cysteine persulfide intermediate in the catalytic mechanism. Residues 308 to 309 (RY) form an interaction with tRNA region.

It belongs to the MnmA/TRMU family.

It is found in the cytoplasm. The catalysed reaction is S-sulfanyl-L-cysteinyl-[protein] + uridine(34) in tRNA + AH2 + ATP = 2-thiouridine(34) in tRNA + L-cysteinyl-[protein] + A + AMP + diphosphate + H(+). In terms of biological role, catalyzes the 2-thiolation of uridine at the wobble position (U34) of tRNA, leading to the formation of s(2)U34. In Nitrosomonas eutropha (strain DSM 101675 / C91 / Nm57), this protein is tRNA-specific 2-thiouridylase MnmA.